We begin with the raw amino-acid sequence, 238 residues long: Probable transcriptional regulatory protein MGAS10750_Spy0264 (238 aa).

The protein belongs to the TACO1 family. YeeN subfamily.

Its subcellular location is the cytoplasm. The sequence is that of Probable transcriptional regulatory protein MGAS10750_Spy0264 from Streptococcus pyogenes serotype M4 (strain MGAS10750).